The following is a 926-amino-acid chain: Alanine--tRNA ligase (926 aa).

Zn(2+) contacts are provided by His577, His581, Cys680, and His684.

The protein belongs to the class-II aminoacyl-tRNA synthetase family. The cofactor is Zn(2+).

Its subcellular location is the cytoplasm. It carries out the reaction tRNA(Ala) + L-alanine + ATP = L-alanyl-tRNA(Ala) + AMP + diphosphate. In terms of biological role, catalyzes the attachment of alanine to tRNA(Ala) in a two-step reaction: alanine is first activated by ATP to form Ala-AMP and then transferred to the acceptor end of tRNA(Ala). Also edits incorrectly charged Ser-tRNA(Ala) and Gly-tRNA(Ala) via its editing domain. The polypeptide is Alanine--tRNA ligase (Methylacidiphilum infernorum (isolate V4) (Methylokorus infernorum (strain V4))).